A 180-amino-acid chain; its full sequence is Stathmin-3 (180 aa).

S-palmitoyl cysteine attachment occurs at residues Cys-22 and Cys-24. The region spanning 38-180 (GDMEVKQLDK…NKEQREEMSG (143 aa)) is the SLD domain. Ser-50, Ser-60, Ser-65, Ser-68, Ser-72, Ser-73, and Ser-81 each carry phosphoserine. Residues 59 to 82 (KSPSDLSPESPMLSSPPKKKDTSL) form a disordered region. Residues 60 to 74 (SPSDLSPESPMLSSP) are compositionally biased toward low complexity. The stretch at 76 to 179 (KKKDTSLEEL…RNKEQREEMS (104 aa)) forms a coiled coil.

The protein belongs to the stathmin family. As to quaternary structure, interacts with STAT3. Interacts with CLU (secreted form); this interaction may act as an important modulator during neuronal differentiation. Post-translationally, N-terminal palmitoylation promotes specific anchoring to the cytosolic leaflet of Golgi membranes and subsequent vesicular trafficking along dendrites and axons. Neuronal Stathmins are substrates for palmitoyltransferases ZDHHC3, ZDHHC7 and ZDHHC15.

Its subcellular location is the golgi apparatus. It is found in the cell projection. The protein resides in the growth cone. It localises to the axon. The protein localises to the cytoplasm. Its subcellular location is the cytosol. Its function is as follows. Exhibits microtubule-destabilizing activity, which is antagonized by STAT3. The protein is Stathmin-3 (STMN3) of Macaca fascicularis (Crab-eating macaque).